We begin with the raw amino-acid sequence, 305 residues long: Plant-type L-asparaginase (305 aa).

Threonine 175 functions as the Nucleophile in the catalytic mechanism. Substrate contacts are provided by residues 202-205 (RVGD) and 224-227 (TGLG).

This sequence belongs to the Ntn-hydrolase family. In terms of assembly, heterotetramer of two alpha and two beta chains arranged as a dimer of alpha/beta heterodimers. The uncleaved protein forms homodimers. Post-translationally, autocleaved. Generates the alpha and beta subunits. The N-terminal residue of the beta subunit is thought to be responsible for the nucleophile hydrolase activity.

It catalyses the reaction L-asparagine + H2O = L-aspartate + NH4(+). Functionally, catalyzes the hydrolysis of L-asparagine into L-aspartate and ammonia. Does not exhibit glutaminase activity. This is Plant-type L-asparaginase from Pyrococcus abyssi (strain GE5 / Orsay).